The primary structure comprises 118 residues: Fluoride-specific ion channel FluC 1 (118 aa).

The next 2 membrane-spanning stretches (helical) occupy residues 1 to 21 and 29 to 49; these read MIQC…RGFV and FNTS…FCIG. Na(+)-binding residues include G71 and T74. Residues 95–115 form a helical membrane-spanning segment; that stretch reads LFILYSILQYGVSFVACLLGY.

Belongs to the fluoride channel Fluc/FEX (TC 1.A.43) family.

The protein localises to the cell membrane. It catalyses the reaction fluoride(in) = fluoride(out). With respect to regulation, na(+) is not transported, but it plays an essential structural role and its presence is essential for fluoride channel function. Its function is as follows. Fluoride-specific ion channel. Important for reducing fluoride concentration in the cell, thus reducing its toxicity. This chain is Fluoride-specific ion channel FluC 1, found in Staphylococcus saprophyticus subsp. saprophyticus (strain ATCC 15305 / DSM 20229 / NCIMB 8711 / NCTC 7292 / S-41).